The following is a 132-amino-acid chain: Transcription antitermination protein NusB (132 aa).

Belongs to the NusB family.

Its function is as follows. Involved in transcription antitermination. Required for transcription of ribosomal RNA (rRNA) genes. Binds specifically to the boxA antiterminator sequence of the ribosomal RNA (rrn) operons. This Campylobacter lari (strain RM2100 / D67 / ATCC BAA-1060) protein is Transcription antitermination protein NusB.